Consider the following 311-residue polypeptide: GTPase Era (311 aa).

An Era-type G domain is found at Arg18–Asn185. Residues Gly26 to Ser33 form a G1 region. Position 26-33 (Gly26–Ser33) interacts with GTP. Residues Gln52 to Ala56 are G2. Residues Asp73–Gly76 are G3. Residues Asp73 to Ile77 and Asn135 to Asp138 each bind GTP. The G4 stretch occupies residues Asn135 to Asp138. The interval Ile164–Ala166 is G5. In terms of domain architecture, KH type-2 spans Leu216–Glu293.

This sequence belongs to the TRAFAC class TrmE-Era-EngA-EngB-Septin-like GTPase superfamily. Era GTPase family. As to quaternary structure, monomer.

Its subcellular location is the cytoplasm. The protein resides in the cell inner membrane. In terms of biological role, an essential GTPase that binds both GDP and GTP, with rapid nucleotide exchange. Plays a role in 16S rRNA processing and 30S ribosomal subunit biogenesis and possibly also in cell cycle regulation and energy metabolism. The protein is GTPase Era of Brucella melitensis biotype 1 (strain ATCC 23456 / CCUG 17765 / NCTC 10094 / 16M).